The primary structure comprises 132 residues: Small ribosomal subunit protein uS8 (132 aa).

This sequence belongs to the universal ribosomal protein uS8 family. Part of the 30S ribosomal subunit. Contacts proteins S5 and S12.

In terms of biological role, one of the primary rRNA binding proteins, it binds directly to 16S rRNA central domain where it helps coordinate assembly of the platform of the 30S subunit. The protein is Small ribosomal subunit protein uS8 of Streptococcus agalactiae serotype Ia (strain ATCC 27591 / A909 / CDC SS700).